The primary structure comprises 884 residues: Probable inorganic carbon transporter subunit DabA (884 aa).

4 residues coordinate Zn(2+): Cys390, Asp392, His582, and Cys597.

This sequence belongs to the inorganic carbon transporter (TC 9.A.2) DabA family. As to quaternary structure, forms a complex with DabB. Zn(2+) serves as cofactor.

Its subcellular location is the cell membrane. In terms of biological role, part of an energy-coupled inorganic carbon pump. The chain is Probable inorganic carbon transporter subunit DabA from Staphylococcus saprophyticus subsp. saprophyticus (strain ATCC 15305 / DSM 20229 / NCIMB 8711 / NCTC 7292 / S-41).